Consider the following 254-residue polypeptide: Imidazole glycerol phosphate synthase subunit HisF (254 aa).

Residues Asp11 and Asp130 contribute to the active site.

It belongs to the HisA/HisF family. Heterodimer of HisH and HisF.

It is found in the cytoplasm. It catalyses the reaction 5-[(5-phospho-1-deoxy-D-ribulos-1-ylimino)methylamino]-1-(5-phospho-beta-D-ribosyl)imidazole-4-carboxamide + L-glutamine = D-erythro-1-(imidazol-4-yl)glycerol 3-phosphate + 5-amino-1-(5-phospho-beta-D-ribosyl)imidazole-4-carboxamide + L-glutamate + H(+). It functions in the pathway amino-acid biosynthesis; L-histidine biosynthesis; L-histidine from 5-phospho-alpha-D-ribose 1-diphosphate: step 5/9. Its function is as follows. IGPS catalyzes the conversion of PRFAR and glutamine to IGP, AICAR and glutamate. The HisF subunit catalyzes the cyclization activity that produces IGP and AICAR from PRFAR using the ammonia provided by the HisH subunit. This Acidiphilium cryptum (strain JF-5) protein is Imidazole glycerol phosphate synthase subunit HisF.